Consider the following 1026-residue polypeptide: MAKTDPLTLQQLLAQRHWENPALTQLNRLPAHTPLASWRNADAARGDLASPSQRLLDGEWGFSYFDRPQAVPDAWINGDLPQVGRLSVPSNWQLSGYDAPIYTNVQYPIPTDPPRVPDDNPTGCYSLTFHCQPAWLQSGQTRIIFDGVNSAFYLWCNGEFIGYSQDSRLPAEFDLSQRLLEGENRIAVMVLRWCDGSYLEDQDMWRMSGIFRSVSLLHKPHVRLDDIHIDTRLSPEYRSAQLRVLALCSLTDASAYQLKVTLWRDDTLIAQHQQPFGTPVVDERGRYLDRTRLSLQIDQPLLWNAETPHLYRAVIALLDADGTLIEAEACDVGFRQVEVSGGLLKLNGKALLIRGTNRHEHHPDRGQVMDEPAMIADILLMKQHNFNAVRCSHYPNHPLWYRLCDRYGLYVVDEANIETHGMQPMNRLADDPSWFSAFSERVTRMVQRDRNHACIIIWSLGNESGHGSTHDALYGWIKSDDPSRPVQYEGGGADTAASDIICPMYARVDRDQPFEAVPKWSIKKWIALPEETRPLILCEYAHAMGNSLGGFSRYWQAFRQYPPLQGGFVWDWADQNLTRQAADGSSWQAYGGDFGDMPNDRQFCMNGLVFADRSPHPALFEAKRAQQFFQFQLENTSPITLGITSEYLFRHSDNERLCWRIEHHGEQVAGGQITLNLPPEGTVSLMLGELPSLAGELWLRVEVIQPAATAWSPANHRVAWDGWQLPAALSLPKPDVPGEQPRLHPQSQLIEVVQAGQRWQFCRQSGELIQWLQADKPQLLSPLRDLFVRAPLDNDIGISEANRIDPHAWAERWQRAGYYRLESQLLRLQTDILNDGVQIRSEQAWLADGEPRFLSRKCYRINRQGEMLLEVEVDIAAGLPEPARIGLHCQLAEVAEEVCWLGLGPHENYPDRRLAAEFSRWQLPLGALSTPYVFPCENGLRGGTRELTFGHWHIRGDFHFSLSRHSVEQLRKTSHRHLLRDEAGCWLTLDGFHMGVGGDDSWSPSVDEEFLLRARQYRYRLILTRG.

Positions 104 and 203 each coordinate substrate. Asp203 is a Na(+) binding site. Glu418, His420, and Glu463 together coordinate Mg(2+). Substrate is bound by residues Glu463 and 539 to 542 (EYAH). Glu463 functions as the Proton donor in the catalytic mechanism. Glu539 (nucleophile) is an active-site residue. Asn599 is a Mg(2+) binding site. Na(+) contacts are provided by Phe603 and Asn606. The substrate site is built by Asn606 and Trp1002.

It belongs to the glycosyl hydrolase 2 family. As to quaternary structure, homotetramer. Mg(2+) is required as a cofactor. The cofactor is Na(+).

It carries out the reaction Hydrolysis of terminal non-reducing beta-D-galactose residues in beta-D-galactosides.. This is Beta-galactosidase from Erwinia tasmaniensis (strain DSM 17950 / CFBP 7177 / CIP 109463 / NCPPB 4357 / Et1/99).